We begin with the raw amino-acid sequence, 254 residues long: Isoprenyl transferase (254 aa).

Residue Asp34 is part of the active site. Asp34 is a Mg(2+) binding site. Substrate-binding positions include 35–38 (GNGR), Trp39, Arg47, His51, and 79–81 (STE). Residue Asn82 is the Proton acceptor of the active site. Residues Trp83, Arg85, Arg202, and 208 to 210 (RIS) contribute to the substrate site. Mg(2+) is bound at residue Glu221.

It belongs to the UPP synthase family. Homodimer. Mg(2+) serves as cofactor.

Its function is as follows. Catalyzes the condensation of isopentenyl diphosphate (IPP) with allylic pyrophosphates generating different type of terpenoids. This Staphylococcus saprophyticus subsp. saprophyticus (strain ATCC 15305 / DSM 20229 / NCIMB 8711 / NCTC 7292 / S-41) protein is Isoprenyl transferase.